We begin with the raw amino-acid sequence, 445 residues long: Transmembrane protein 184C (445 aa).

Transmembrane regions (helical) follow at residues 15 to 35 (LVVL…VWEL), 46 to 66 (AWFI…WGIL), 84 to 104 (ILWM…YPNI), 177 to 197 (YTVV…VGVY), 210 to 230 (YLVI…VLFY), 252 to 272 (VVFV…VGVI), and 285 to 305 (AVAT…AAIA). Disordered stretches follow at residues 369 to 393 (EHTS…SSPM) and 421 to 445 (TSAT…LDRS). Over residues 370–390 (HTSLLSSSTQDPISDASSMPS) the composition is skewed to polar residues.

This sequence belongs to the TMEM184 family.

The protein localises to the membrane. In terms of biological role, may play a role in cell growth. In Gallus gallus (Chicken), this protein is Transmembrane protein 184C (TMEM184C).